Here is a 266-residue protein sequence, read N- to C-terminus: MFLVNSFLKGGGGGGGGGGLGGGLGNVLGGLISGAGGGGGGGGGGGGGGAGGGGTAMRILGGVISAISEAAAQYNPEPPPPRTHYSNIEANESEEVRQFRRLFAQLAGDDMEVSATELMNILNKVVTRHPDLKTDGFGLDTCRSMVAVMDSDTTGKLGFEEFKYLWNNIKKWQAIYKQFDVDRSGTICSRELPGAFEAAGFHLNEHLYNMIIRRYSDEAGNMDFDNFISCLVRLDAMFRAFKSLDKDGTGQIQVNIQEWLQLTMYS.

An N-acetylmethionine modification is found at M1. S6 bears the Phosphoserine mark. Residues 94–128 (EEVRQFRRLFAQLAGDDMEVSATELMNILNKVVTR) enclose the EF-hand 1; atypical domain. A107, D110, E112, E117, D135, D150, D152, T154, K156, and E161 together coordinate Ca(2+). EF-hand domains follow at residues 137 to 170 (FGLD…NNIK), 167 to 202 (NNIK…AGFH), 203 to 231 (LNEH…ISCL), and 232 to 266 (VRLD…TMYS). K177 bears the N6-acetyllysine mark. Positions 180, 182, 184, 186, 191, and 223 each coordinate Ca(2+).

As to quaternary structure, homodimer or heterodimer of a large (catalytic) and a small (regulatory) subunit. In presence of calcium, the heterodimer dissociates. Post-translationally, the N-terminus is blocked.

It is found in the cytoplasm. It localises to the cell membrane. Functionally, regulatory subunit of the calcium-regulated non-lysosomal thiol-protease which catalyzes limited proteolysis of substrates involved in cytoskeletal remodeling and signal transduction. Essential for embryonic development. The protein is Calpain small subunit 1 (CAPNS1) of Oryctolagus cuniculus (Rabbit).